The primary structure comprises 248 residues: uncharacterized protein (248 aa).

Residues 7–25 traverse the membrane as a helical segment; it reads TIFIGGIYGLGVYIGAVAW.

Belongs to the methyltransferase superfamily. METL family.

Its subcellular location is the mitochondrion inner membrane. In terms of biological role, probable methyltransferase. This is an uncharacterized protein from Schizosaccharomyces pombe (strain 972 / ATCC 24843) (Fission yeast).